We begin with the raw amino-acid sequence, 328 residues long: L-tyrosine isonitrile synthase (328 aa).

Belongs to the isocyanide synthase family. In terms of assembly, monomer in solution.

The catalysed reaction is D-ribulose 5-phosphate + L-tyrosine = (2S)-3-(4-hydroxyphenyl)-2-isocyanopropanoate + hydroxyacetone + formaldehyde + phosphate + H2O + H(+). In terms of biological role, involved in the biosynthesis of paerucumarin, a cyclized isocyano derivative of tyrosine. Responsible for the synthesis of the isonitrile group on tyrosine using the C2 of ribulose 5-phosphate as the source of the carbon atom. The sequence is that of L-tyrosine isonitrile synthase from Pseudomonas aeruginosa (strain ATCC 15692 / DSM 22644 / CIP 104116 / JCM 14847 / LMG 12228 / 1C / PRS 101 / PAO1).